A 512-amino-acid polypeptide reads, in one-letter code: 2-isopropylmalate synthase (512 aa).

The Pyruvate carboxyltransferase domain maps to 4–266 (IQFFDTTLRD…ETNIVLNQFK (263 aa)). D13, H201, H203, and N237 together coordinate Mn(2+). Residues 390–512 (ELKHLQVQYV…SKQADFEEVK (123 aa)) are regulatory domain.

Belongs to the alpha-IPM synthase/homocitrate synthase family. LeuA type 1 subfamily. As to quaternary structure, homodimer. The cofactor is Mn(2+).

It localises to the cytoplasm. The catalysed reaction is 3-methyl-2-oxobutanoate + acetyl-CoA + H2O = (2S)-2-isopropylmalate + CoA + H(+). The protein operates within amino-acid biosynthesis; L-leucine biosynthesis; L-leucine from 3-methyl-2-oxobutanoate: step 1/4. Its function is as follows. Catalyzes the condensation of the acetyl group of acetyl-CoA with 3-methyl-2-oxobutanoate (2-ketoisovalerate) to form 3-carboxy-3-hydroxy-4-methylpentanoate (2-isopropylmalate). This is 2-isopropylmalate synthase from Listeria monocytogenes serotype 4b (strain CLIP80459).